The following is a 562-amino-acid chain: MTLSGILAIFLVVLALVACAWPLGGYIYRTFVGERVRPDAVMVPVERAIYRLIGVNPEVEMDWKAYLRAMMVSNLVMALFAYAVFRLQGVLPLNPAHIPAMPPYLAFNTAASFITNTNWQNYAGEQSLSYLSQMIGITFLQFTSAATGLAAAMAFLRGLSRQKTDALGNFWVDLVKAHTRLLLPIAAILAVLLLALGVPETLSGPAVVHTLAGSMQTIARGPVATLEAIKQLGTNGGGFFNANSAHPFENPNAWTCILEIMGMGLIPTALVFTAGHFLRSRRLAIVLCTLLGAILLAGAYIVYAYEAAGNPILAHALGIHGPNMEGKEVRFGLPLTSLFVAATTAYTTGAVNAMHDSLMPLSGMVPLLFMMFNLIFGGKGVGLLNILMFLIIAVFISGLMVGRTPEIFGKKIEAREMKLATAAMLVHPFVILVPTAIAMALPSARASMGNPGLHGFTEVLYAFTSAAANNGSAFAGLNGNTPFYNISIGLVMLFGRYVSIIAMLAIAGSLAGKARIPETSGTLKVDTFAFGYVFVAVFIIVGALTFFPYLALGPIGEQLQLG.

12 helical membrane passes run 5–25, 65–85, 135–155, 181–201, 257–277, 283–303, 331–351, 358–378, 381–401, 422–442, 486–506, and 528–548; these read GILA…PLGG, AYLR…YAVF, IGIT…AMAF, LLLP…VPET, ILEI…AGHF, LAIV…YIVY, FGLP…TGAV, LMPL…IFGG, VGLL…GLMV, AAML…MALP, ISIG…MLAI, and FAFG…TFFP.

Belongs to the KdpA family. In terms of assembly, the system is composed of three essential subunits: KdpA, KdpB and KdpC.

It localises to the cell membrane. Its function is as follows. Part of the high-affinity ATP-driven potassium transport (or Kdp) system, which catalyzes the hydrolysis of ATP coupled with the electrogenic transport of potassium into the cytoplasm. This subunit binds the extracellular potassium ions and delivers the ions to the membrane domain of KdpB through an intramembrane tunnel. This is Potassium-transporting ATPase potassium-binding subunit from Alicyclobacillus acidocaldarius subsp. acidocaldarius (strain ATCC 27009 / DSM 446 / BCRC 14685 / JCM 5260 / KCTC 1825 / NBRC 15652 / NCIMB 11725 / NRRL B-14509 / 104-IA) (Bacillus acidocaldarius).